The sequence spans 213 residues: MOB kinase activator-like 1 homolog A (213 aa).

Zn(2+)-binding residues include Cys77, Cys82, His159, and His164.

The protein belongs to the MOB1/phocein family.

This Dictyostelium discoideum (Social amoeba) protein is MOB kinase activator-like 1 homolog A (mobA).